We begin with the raw amino-acid sequence, 681 residues long: Probable glutamate carboxypeptidase LAMP1 (681 aa).

Over 1-6 (MSKSKS) the chain is Cytoplasmic. A helical; Signal-anchor for type II membrane protein membrane pass occupies residues 7 to 24 (LAFVIAALSYSFFSLFSS). The Extracellular segment spans residues 25-681 (PPKSHYHELF…ASLVLKGELI (657 aa)). Asparagine 42, asparagine 140, asparagine 166, and asparagine 299 each carry an N-linked (GlcNAc...) asparagine glycan. Positions 241–527 (SVDGCERLSD…SVLGLVALRL (287 aa)) are catalytic. Residues histidine 333 and aspartate 343 each contribute to the Zn(2+) site. The active-site Nucleophile is the glutamate 380. 2 residues coordinate Zn(2+): glutamate 381 and aspartate 409. Asparagine 441 is a glycosylation site (N-linked (GlcNAc...) asparagine). A Zn(2+)-binding site is contributed by histidine 493. The N-linked (GlcNAc...) asparagine glycan is linked to asparagine 536.

Belongs to the peptidase M28 family. M28B subfamily. The cofactor is Zn(2+).

The protein localises to the endoplasmic reticulum membrane. It catalyses the reaction Release of an unsubstituted, C-terminal glutamyl residue, typically from Ac-Asp-Glu or folylpoly-gamma-glutamates.. Its function is as follows. Acts in association with AMP1 to suppress ectopic stem cell niche formation in the shoot apical meristem (SAM) independently of cytokinin signaling pathway. The polypeptide is Probable glutamate carboxypeptidase LAMP1 (Arabidopsis thaliana (Mouse-ear cress)).